Here is a 223-residue protein sequence, read N- to C-terminus: 2-C-methyl-D-erythritol 4-phosphate cytidylyltransferase (223 aa).

Belongs to the IspD/TarI cytidylyltransferase family. IspD subfamily.

The catalysed reaction is 2-C-methyl-D-erythritol 4-phosphate + CTP + H(+) = 4-CDP-2-C-methyl-D-erythritol + diphosphate. It participates in isoprenoid biosynthesis; isopentenyl diphosphate biosynthesis via DXP pathway; isopentenyl diphosphate from 1-deoxy-D-xylulose 5-phosphate: step 2/6. Functionally, catalyzes the formation of 4-diphosphocytidyl-2-C-methyl-D-erythritol from CTP and 2-C-methyl-D-erythritol 4-phosphate (MEP). This chain is 2-C-methyl-D-erythritol 4-phosphate cytidylyltransferase, found in Prochlorococcus marinus (strain MIT 9215).